A 797-amino-acid chain; its full sequence is MQVSYKWLKELVPNLRATSAELEQKMSTSGIEVEGVTSPMEGLSKLVVGEILSSEDIPDTHLHITQVNVGAEESLQIVCGAPNVRVGMKVIVALVGARIADNYKIKKGKIRGVESLGMLCALDEIGIDEKINPMKHEDGIFEMPADAKVGDSIFSYLDMDDEIIELSITPNRADALSMHGAAWEVGAIYGLPVQLEKKDLVEASESAASKIAVKVETDKVPTYKIRLIEGVKIAKSPQWLQNRLMNAGVKPINNVVDVTNYVLMAFGQPLHSFDFSKFGSDEILVRQAKAGEKMTTLDHVERELDDSDIVVTANGLPVALGGVMGGADSEITDETTSVALEAALFDGTSIRKTSQKFALRSEASSRFEKGINEGTVREALDFAAAMIVELAGGKVLSGVVESNDYQPILPKVSITLSRVNSALGTDLSLETVEKIFVQLGFGVEVEGEKFTCEIPSRRWDIHIEADLVEEVARIYGYDNLPSTLPSSQNAGELTQMQKFRRTVRTGLESSGLNEVIGYSLVTPEKATEFVGQLETTTLMMPMTEDRQTLRANMIPGLLDIVNYNQNRKNADVAIYEIGNIFLPNPDDIRPIEVPNLAFAISGNVVDKSYNGQAVPVDFYYAKGIVENLLEAYKEVEFIPSNNQAAMHPGRTAVIKINGRVAGFVGQIHPATAKKYDIAETYVAGLDMQVMLEELPAQTIFTDIPKVQAVHRDIALLIDAEVTHAQIVSVIKSSRIKTLSQVELFDIYQGKNLPAGKKSMAYSLTFQPVENTMTDEEITAAVNKITKNLVEKLDIEIR.

A tRNA-binding domain is found at 40–154 (MEGLSKLVVG…ADAKVGDSIF (115 aa)). Residues 407–482 (PILPKVSITL…RIYGYDNLPS (76 aa)) enclose the B5 domain. Residues aspartate 460, aspartate 466, glutamate 469, and glutamate 470 each contribute to the Mg(2+) site. The 94-residue stretch at 704-797 (PKVQAVHRDI…LVEKLDIEIR (94 aa)) folds into the FDX-ACB domain.

The protein belongs to the phenylalanyl-tRNA synthetase beta subunit family. Type 1 subfamily. In terms of assembly, tetramer of two alpha and two beta subunits. The cofactor is Mg(2+).

It is found in the cytoplasm. It catalyses the reaction tRNA(Phe) + L-phenylalanine + ATP = L-phenylalanyl-tRNA(Phe) + AMP + diphosphate + H(+). In Lactococcus lactis subsp. lactis (strain IL1403) (Streptococcus lactis), this protein is Phenylalanine--tRNA ligase beta subunit.